Consider the following 224-residue polypeptide: LexA repressor (224 aa).

The segment at residues 38–58 is a DNA-binding region (H-T-H motif); that stretch reads IREIGDAVGLTSTSSVAHQLR. Residues 71-82 are compositionally biased toward basic and acidic residues; sequence NRPRAVDVRGID. The segment at 71-96 is disordered; the sequence is NRPRAVDVRGIDDAGTPSATTDVIGS. Catalysis depends on for autocatalytic cleavage activity residues S148 and K185.

This sequence belongs to the peptidase S24 family. As to quaternary structure, homodimer.

It catalyses the reaction Hydrolysis of Ala-|-Gly bond in repressor LexA.. Its function is as follows. Represses a number of genes involved in the response to DNA damage (SOS response), including recA and lexA. In the presence of single-stranded DNA, RecA interacts with LexA causing an autocatalytic cleavage which disrupts the DNA-binding part of LexA, leading to derepression of the SOS regulon and eventually DNA repair. In Mycobacteroides abscessus (strain ATCC 19977 / DSM 44196 / CCUG 20993 / CIP 104536 / JCM 13569 / NCTC 13031 / TMC 1543 / L948) (Mycobacterium abscessus), this protein is LexA repressor.